The following is a 245-amino-acid chain: Cell division protein ZapD (245 aa).

It belongs to the ZapD family. As to quaternary structure, interacts with FtsZ.

The protein resides in the cytoplasm. Cell division factor that enhances FtsZ-ring assembly. Directly interacts with FtsZ and promotes bundling of FtsZ protofilaments, with a reduction in FtsZ GTPase activity. In Photobacterium profundum (strain SS9), this protein is Cell division protein ZapD.